Reading from the N-terminus, the 393-residue chain is Chalcone synthase G (393 aa).

The active site involves Cys164.

The protein belongs to the thiolase-like superfamily. Chalcone/stilbene synthases family. As to expression, expressed in seedlings after illumination with UV light. No expression detectable in flowers. It is not known for sure whether CHSG encodes a chalcone synthase or a very closely related condensing enzyme.

The catalysed reaction is (E)-4-coumaroyl-CoA + 3 malonyl-CoA + 3 H(+) = 2',4,4',6'-tetrahydroxychalcone + 3 CO2 + 4 CoA. It functions in the pathway secondary metabolite biosynthesis; flavonoid biosynthesis. In terms of biological role, the primary product of this enzyme is 4,2',4',6'-tetrahydroxychalcone (also termed naringenin-chalcone or chalcone) which can under specific conditions spontaneously isomerize into naringenin. This chain is Chalcone synthase G (CHSG), found in Petunia hybrida (Petunia).